Consider the following 261-residue polypeptide: 5'-nucleotidase SurE (261 aa).

A divalent metal cation is bound by residues aspartate 8, aspartate 9, serine 43, and asparagine 96.

This sequence belongs to the SurE nucleotidase family. Requires a divalent metal cation as cofactor.

The protein resides in the cytoplasm. It carries out the reaction a ribonucleoside 5'-phosphate + H2O = a ribonucleoside + phosphate. Functionally, nucleotidase that shows phosphatase activity on nucleoside 5'-monophosphates. The chain is 5'-nucleotidase SurE from Dinoroseobacter shibae (strain DSM 16493 / NCIMB 14021 / DFL 12).